A 129-amino-acid polypeptide reads, in one-letter code: Glycine cleavage system H protein (129 aa).

The Lipoyl-binding domain occupies 24-106; it reads LIRVGISAFA…HGAGWLLVVR (83 aa). K65 carries the N6-lipoyllysine modification.

This sequence belongs to the GcvH family. The glycine cleavage system is composed of four proteins: P, T, L and H. (R)-lipoate is required as a cofactor.

In terms of biological role, the glycine cleavage system catalyzes the degradation of glycine. The H protein shuttles the methylamine group of glycine from the P protein to the T protein. This is Glycine cleavage system H protein from Synechococcus sp. (strain CC9902).